The chain runs to 105 residues: Neuropeptide-like protein 32 (105 aa).

A signal peptide spans 1–22; that stretch reads MRQFNLLLVFCLIALTALPVFS. A propeptide spanning residues 23–54 is cleaved from the precursor; that stretch reads FPNGLTMDSIDMEPMGAFDENGAADESPRVKR. Glycine 59 is modified (glycine amide). A Tryptophan amide modification is found at tryptophan 64. Residues glycine 68, glycine 73, and glycine 80 each carry the glycine amide modification. Residue tryptophan 86 is modified to Tryptophan amide. 2 positions are modified to glycine amide: glycine 91 and glycine 98. Residue tryptophan 103 is modified to Tryptophan amide.

The protein belongs to the YARP (YGGW-amide related peptide) family.

It localises to the secreted. May have antimicrobial activity. This chain is Neuropeptide-like protein 32 (nlp-32), found in Caenorhabditis elegans.